The sequence spans 92 residues: C-C motif chemokine 3 (92 aa).

The signal sequence occupies residues 1–23; sequence MQVSTAALAVLLCTMALCNQFSA. Intrachain disulfides connect cysteine 33-cysteine 57 and cysteine 34-cysteine 73.

It belongs to the intercrine beta (chemokine CC) family. In terms of assembly, self-associates. Also heterodimer of MIP-1-alpha(4-69) and MIP-1-beta(3-69). Interacts with CCR1. In terms of processing, N-terminal processed form LD78-alpha(4-69) is produced by proteolytic cleavage after secretion from HTLV1-transformed T-cells.

The protein localises to the secreted. Its function is as follows. Monokine with inflammatory and chemokinetic properties. Binds to CCR1, CCR4 and CCR5. One of the major HIV-suppressive factors produced by CD8+ T-cells. Recombinant MIP-1-alpha induces a dose-dependent inhibition of different strains of HIV-1, HIV-2, and simian immunodeficiency virus (SIV). This Homo sapiens (Human) protein is C-C motif chemokine 3 (CCL3).